Here is a 577-residue protein sequence, read N- to C-terminus: Pentatricopeptide repeat-containing protein At1g06143 (577 aa).

PPR repeat units follow at residues 59 to 89 (DCRLMNQFITACTSFKRLDLAVSTMTQMQEP), 90 to 124 (NVFVYNALFKGFVTCSHPIRSLELYVRMLRDSVSP), 125 to 155 (SSYTYSSLVKASSFASRFGESLQAHIWKFGF), 158 to 192 (HVKIQTTLIDFYSATGRIREARKVFDEMPERDDIA), 193 to 219 (WTTMVSAYRRVLDMDSANSLANQMSEK), 220 to 250 (NEATSNCLINGYMGLGNLEQAESLFNQMPVK), 251 to 285 (DIISWTTMIKGYSQNKRYREAIAVFYKMMEEGIIP), 286 to 320 (DEVTMSTVISACAHLGVLEIGKEVHMYTLQNGFVL), 321 to 351 (DVYIGSALVDMYSKCGSLERALLVFFNLPKK), 352 to 386 (NLFCWNSIIEGLAAHGFAQEALKMFAKMEMESVKP), 387 to 417 (NAVTFVSVFTACTHAGLVDEGRRIYRSMIDD), and 423 to 453 (NVEHYGGMVHLFSKAGLIYEALELIGNMEFE). Residues 458–534 (IWGALLDGCR…CPGTSSIRID (77 aa)) are type E motif. Residues 535–565 (KRDHLFAAADKSHSASDEVCLLLDEIYDQMG) form a type E(+) motif region.

This sequence belongs to the PPR family. PCMP-E subfamily.

The polypeptide is Pentatricopeptide repeat-containing protein At1g06143 (EMB1444) (Arabidopsis thaliana (Mouse-ear cress)).